A 461-amino-acid polypeptide reads, in one-letter code: Bifunctional protein HldE (461 aa).

The tract at residues 1–312 (MLEFLSQQKP…IKSFNRVDFE (312 aa)) is ribokinase. Residue 191-194 (NKKE) coordinates ATP. The active site involves Asp259. The cytidylyltransferase stretch occupies residues 334–461 (FTNGCFDIVH…KIIEKIKDKK (128 aa)).

This sequence in the N-terminal section; belongs to the carbohydrate kinase PfkB family. The protein in the C-terminal section; belongs to the cytidylyltransferase family. Homodimer.

The enzyme catalyses D-glycero-beta-D-manno-heptose 7-phosphate + ATP = D-glycero-beta-D-manno-heptose 1,7-bisphosphate + ADP + H(+). It catalyses the reaction D-glycero-beta-D-manno-heptose 1-phosphate + ATP + H(+) = ADP-D-glycero-beta-D-manno-heptose + diphosphate. It participates in nucleotide-sugar biosynthesis; ADP-L-glycero-beta-D-manno-heptose biosynthesis; ADP-L-glycero-beta-D-manno-heptose from D-glycero-beta-D-manno-heptose 7-phosphate: step 1/4. It functions in the pathway nucleotide-sugar biosynthesis; ADP-L-glycero-beta-D-manno-heptose biosynthesis; ADP-L-glycero-beta-D-manno-heptose from D-glycero-beta-D-manno-heptose 7-phosphate: step 3/4. In terms of biological role, catalyzes the phosphorylation of D-glycero-D-manno-heptose 7-phosphate at the C-1 position to selectively form D-glycero-beta-D-manno-heptose-1,7-bisphosphate. Catalyzes the ADP transfer from ATP to D-glycero-beta-D-manno-heptose 1-phosphate, yielding ADP-D-glycero-beta-D-manno-heptose. The sequence is that of Bifunctional protein HldE from Campylobacter jejuni subsp. jejuni serotype O:6 (strain 81116 / NCTC 11828).